The primary structure comprises 210 residues: MRDPVETYMNLVPMVVEQTNRGERAYDIFSRLLKERIIFVTGPVEDGMATLIVAQLLFLEAENPKKEIAMYINSPGGVVTSGLAIYDTMQFIRPAVSTLCTGQAASMGSLLLCAGHKDMRFSLPNSRIMVHQPSGGFQGQATDIMLHAQEILSLKKRLNEIYVKHTGQSYKAIEDALERDKFLTAEAAAEFGLIDKVIDKRPEDPAPMAK.

Serine 106 functions as the Nucleophile in the catalytic mechanism. The active site involves histidine 131.

It belongs to the peptidase S14 family. Fourteen ClpP subunits assemble into 2 heptameric rings which stack back to back to give a disk-like structure with a central cavity, resembling the structure of eukaryotic proteasomes.

It localises to the cytoplasm. The enzyme catalyses Hydrolysis of proteins to small peptides in the presence of ATP and magnesium. alpha-casein is the usual test substrate. In the absence of ATP, only oligopeptides shorter than five residues are hydrolyzed (such as succinyl-Leu-Tyr-|-NHMec, and Leu-Tyr-Leu-|-Tyr-Trp, in which cleavage of the -Tyr-|-Leu- and -Tyr-|-Trp bonds also occurs).. Cleaves peptides in various proteins in a process that requires ATP hydrolysis. Has a chymotrypsin-like activity. Plays a major role in the degradation of misfolded proteins. The chain is ATP-dependent Clp protease proteolytic subunit from Bradyrhizobium sp. (strain BTAi1 / ATCC BAA-1182).